The following is a 589-amino-acid chain: Early growth response protein 4 (589 aa).

Disordered regions lie at residues 29–101, 383–411, and 436–466; these read GSAL…HSRR, AEGL…ASTQ, and PGSS…GRRG. Residues 76 to 86 show a composition bias toward pro residues; it reads PLPPASPPPAR. Residues 92-101 show a composition bias toward basic residues; sequence ARPRAPHSRR. Gly residues predominate over residues 395–404; it reads GEGGSSGDGG. Pro residues predominate over residues 444–454; it reads PPVPPPPPTPF. 3 consecutive C2H2-type zinc fingers follow at residues 483–507, 513–535, and 541–563; these read FACP…LRIH, FQCR…VRTH, and FACD…SKVH.

This sequence belongs to the EGR C2H2-type zinc-finger protein family.

It is found in the nucleus. Its function is as follows. Transcriptional regulator. Recognizes and binds to the DNA sequence 5'-GCGGGGGCG-3' (GSG). Activates the transcription of target genes whose products are required for mitogenesis and differentiation. The chain is Early growth response protein 4 (EGR4) from Homo sapiens (Human).